The primary structure comprises 161 residues: Small ribosomal subunit protein eS6 (161 aa).

The segment at 119–161 (VLLGEEEPEDADDDGDSDVDADEATDTDAGSEEDNDDDIADAE) is disordered. The span at 122–161 (GEEEPEDADDDGDSDVDADEATDTDAGSEEDNDDDIADAE) shows a compositional bias: acidic residues.

It belongs to the eukaryotic ribosomal protein eS6 family.

This chain is Small ribosomal subunit protein eS6, found in Haloquadratum walsbyi (strain DSM 16790 / HBSQ001).